The sequence spans 207 residues: Small ribosomal subunit protein uS4 (207 aa).

Residues 33–54 (KLDSKPGQHGRTSGARTSDYGN) form a disordered region. A compositionally biased stretch (polar residues) spans 42 to 53 (GRTSGARTSDYG). The region spanning 97–160 (SRLDNVVYRM…KKQVRIAEAL (64 aa)) is the S4 RNA-binding domain.

The protein belongs to the universal ribosomal protein uS4 family. As to quaternary structure, part of the 30S ribosomal subunit. Contacts protein S5. The interaction surface between S4 and S5 is involved in control of translational fidelity.

In terms of biological role, one of the primary rRNA binding proteins, it binds directly to 16S rRNA where it nucleates assembly of the body of the 30S subunit. Functionally, with S5 and S12 plays an important role in translational accuracy. This is Small ribosomal subunit protein uS4 from Cupriavidus pinatubonensis (strain JMP 134 / LMG 1197) (Cupriavidus necator (strain JMP 134)).